Here is a 443-residue protein sequence, read N- to C-terminus: Ribosomal protein uS12 methylthiotransferase RimO (443 aa).

Positions P8 to P118 constitute an MTTase N-terminal domain. Residues C17, C53, C82, C150, C154, and C157 each contribute to the [4Fe-4S] cluster site. Positions L136–E373 constitute a Radical SAM core domain. Residues Q376–E442 form the TRAM domain.

Belongs to the methylthiotransferase family. RimO subfamily. It depends on [4Fe-4S] cluster as a cofactor.

It localises to the cytoplasm. The catalysed reaction is L-aspartate(89)-[ribosomal protein uS12]-hydrogen + (sulfur carrier)-SH + AH2 + 2 S-adenosyl-L-methionine = 3-methylsulfanyl-L-aspartate(89)-[ribosomal protein uS12]-hydrogen + (sulfur carrier)-H + 5'-deoxyadenosine + L-methionine + A + S-adenosyl-L-homocysteine + 2 H(+). Its function is as follows. Catalyzes the methylthiolation of an aspartic acid residue of ribosomal protein uS12. This chain is Ribosomal protein uS12 methylthiotransferase RimO, found in Proteus mirabilis (strain HI4320).